The following is a 255-amino-acid chain: tRNA-cytidine(32) 2-sulfurtransferase (255 aa).

A PP-loop motif motif is present at residues 37-42 (SGGKDS). [4Fe-4S] cluster contacts are provided by cysteine 112, cysteine 115, and cysteine 202.

Belongs to the TtcA family. In terms of assembly, homodimer. Mg(2+) serves as cofactor. It depends on [4Fe-4S] cluster as a cofactor.

It is found in the cytoplasm. It catalyses the reaction cytidine(32) in tRNA + S-sulfanyl-L-cysteinyl-[cysteine desulfurase] + AH2 + ATP = 2-thiocytidine(32) in tRNA + L-cysteinyl-[cysteine desulfurase] + A + AMP + diphosphate + H(+). It participates in tRNA modification. Its function is as follows. Catalyzes the ATP-dependent 2-thiolation of cytidine in position 32 of tRNA, to form 2-thiocytidine (s(2)C32). The sulfur atoms are provided by the cysteine/cysteine desulfurase (IscS) system. The polypeptide is tRNA-cytidine(32) 2-sulfurtransferase (Citrifermentans bemidjiense (strain ATCC BAA-1014 / DSM 16622 / JCM 12645 / Bem) (Geobacter bemidjiensis)).